We begin with the raw amino-acid sequence, 146 residues long: Hemoglobin subunit beta (146 aa).

Valine 1 is modified (N-acetylvaline). The Globin domain occupies 2 to 146 (HLTGEEKSLV…VANALAHKYH (145 aa)). Threonine 12 is subject to Phosphothreonine. Serine 44 is modified (phosphoserine). Lysine 59 carries the post-translational modification N6-acetyllysine. A heme b-binding site is contributed by histidine 63. N6-acetyllysine is present on lysine 82. Histidine 92 lines the heme b pocket. An S-nitrosocysteine modification is found at cysteine 93. Residue lysine 144 is modified to N6-acetyllysine.

It belongs to the globin family. In terms of assembly, heterotetramer of two alpha chains and two beta chains. In terms of tissue distribution, red blood cells.

Involved in oxygen transport from the lung to the various peripheral tissues. The polypeptide is Hemoglobin subunit beta (HBB) (Ursus maritimus (Polar bear)).